A 287-amino-acid polypeptide reads, in one-letter code: Polyamine aminopropyltransferase (287 aa).

A PABS domain is found at 5–238; it reads ETWHETLHDH…GIMTFAWASQ (234 aa). Glutamine 33 is a binding site for S-methyl-5'-thioadenosine. Spermidine-binding residues include histidine 64 and aspartate 88. S-methyl-5'-thioadenosine-binding positions include glutamate 108 and 140-141; that span reads DG. Aspartate 158 (proton acceptor) is an active-site residue. Spermidine is bound at residue 158–161; the sequence is DCTD. Residue proline 165 participates in S-methyl-5'-thioadenosine binding.

This sequence belongs to the spermidine/spermine synthase family. In terms of assembly, homodimer or homotetramer.

It is found in the cytoplasm. The catalysed reaction is S-adenosyl 3-(methylsulfanyl)propylamine + putrescine = S-methyl-5'-thioadenosine + spermidine + H(+). Its pathway is amine and polyamine biosynthesis; spermidine biosynthesis; spermidine from putrescine: step 1/1. Functionally, catalyzes the irreversible transfer of a propylamine group from the amino donor S-adenosylmethioninamine (decarboxy-AdoMet) to putrescine (1,4-diaminobutane) to yield spermidine. The sequence is that of Polyamine aminopropyltransferase from Sodalis glossinidius (strain morsitans).